A 433-amino-acid chain; its full sequence is Divergent protein kinase domain 2B (433 aa).

A signal peptide spans 1–29 (MEPRLGPKAAALHLGWPFLLLWVSGLSYS). An N-linked (GlcNAc...) asparagine glycan is attached at asparagine 100.

Belongs to the DIPK family.

Its subcellular location is the secreted. This Bos taurus (Bovine) protein is Divergent protein kinase domain 2B (DIPK2B).